A 390-amino-acid chain; its full sequence is S-adenosylmethionine synthase 1 (390 aa).

Glutamate 9 serves as a coordination point for Mg(2+). Histidine 15 provides a ligand contact to ATP. Glutamate 43 lines the K(+) pocket. Positions 56 and 99 each coordinate L-methionine. ATP-binding positions include 167 to 169 (DGK), 235 to 238 (SGRF), aspartate 246, 252 to 253 (RK), alanine 269, lysine 273, and lysine 277. Aspartate 246 provides a ligand contact to L-methionine. Lysine 277 is a binding site for L-methionine.

It belongs to the AdoMet synthase family. As to quaternary structure, homotetramer. Mn(2+) serves as cofactor. The cofactor is Mg(2+). It depends on Co(2+) as a cofactor. Requires K(+) as cofactor.

The protein resides in the cytoplasm. It carries out the reaction L-methionine + ATP + H2O = S-adenosyl-L-methionine + phosphate + diphosphate. The protein operates within amino-acid biosynthesis; S-adenosyl-L-methionine biosynthesis; S-adenosyl-L-methionine from L-methionine: step 1/1. Catalyzes the formation of S-adenosylmethionine from methionine and ATP. The reaction comprises two steps that are both catalyzed by the same enzyme: formation of S-adenosylmethionine (AdoMet) and triphosphate, and subsequent hydrolysis of the triphosphate. The protein is S-adenosylmethionine synthase 1 (SAM1) of Petunia hybrida (Petunia).